Here is a 112-residue protein sequence, read N- to C-terminus: Nitrogen regulatory protein P-II (112 aa).

Tyrosine 51 is subject to O-UMP-tyrosine.

This sequence belongs to the P(II) protein family. Homotrimer.

P-II indirectly controls the transcription of the glutamine synthetase gene (glnA). P-II prevents NR-II-catalyzed conversion of NR-I to NR-I-phosphate, the transcriptional activator of glnA. When P-II is uridylylated to P-II-UMP, these events are reversed. When the ratio of Gln to 2-ketoglutarate decreases, P-II is uridylylated to P-II-UMP, which causes the deadenylation of glutamine synthetase, so activating the enzyme. This chain is Nitrogen regulatory protein P-II (glnB), found in Rhodospirillum rubrum (strain ATCC 11170 / ATH 1.1.1 / DSM 467 / LMG 4362 / NCIMB 8255 / S1).